The primary structure comprises 597 residues: Kelch-like protein 21 (597 aa).

Residues 35–103 (LDVTLEAAGG…SYTGRVAVSG (69 aa)) enclose the BTB domain. Residues 138–239 (CLDMQDFAEA…RRFYLLAHVE (102 aa)) form the BACK domain. Kelch repeat units follow at residues 287–335 (ILVL…ALGN), 336–382 (DIYV…VLDG), 384–422 (LYVVAADSTERYDHTTDSWEALQPMTYPMDNCSTTACRG), 423–470 (RLYA…TLNG), 472–512 (MYFV…VLGG), and 513–560 (KLYV…SIFR). Positions 570–597 (GRGFELDSGSDDMDPGRPRPPRDPDELH) are disordered. The span at 583–597 (DPGRPRPPRDPDELH) shows a compositional bias: basic and acidic residues.

In terms of assembly, component of the BCR(KLHL21) E3 ubiquitin ligase complex, at least composed of CUL3, KLHL21 and RBX1.

Its subcellular location is the cytoplasm. The protein localises to the cytoskeleton. The protein resides in the spindle. The protein operates within protein modification; protein ubiquitination. Substrate-specific adapter of a BCR (BTB-CUL3-RBX1) E3 ubiquitin-protein ligase complex required for efficient chromosome alignment and cytokinesis. The BCR(KLHL21) E3 ubiquitin ligase complex regulates localization of the chromosomal passenger complex (CPC) from chromosomes to the spindle midzone in anaphase and mediates the ubiquitination of AURKB. Ubiquitination of AURKB by BCR(KLHL21) E3 ubiquitin ligase complex may not lead to its degradation by the proteasome. The sequence is that of Kelch-like protein 21 (KLHL21) from Homo sapiens (Human).